Here is a 391-residue protein sequence, read N- to C-terminus: MSGIVPEIPGEQAPPDAAHQLKVDVARLLQKPKLNFPGAQPVSFARKHIEEELFKRDYYVCEKSDGLRCLMYVTWENNPDTGPQQVTYLITRNNEFFFIPMVHFPSNDGKPLQDTIVDGELVLTKAEPRSLHFLMFDCLACNKILLTGRPLDKRLGYLNAAISHPLKEYLHKNPEVARDFPFSVRVKDMQFAYNVMNVFASFPHLPHITDGLIFTCRDHPYVSGTDERILKWKKQDENSVDFLMTMKFPIFEDTNGESWTDYDAKPEITLLVWTGRDGSRPYGELYLTDEEWDNLKALEEPLEERVVECIKDDKKRWRYLRFRDDKTNANYITTVEKVIDSIDDPVSEKNLLDAAPKIKELWKERNRRPRDEDRKRVGGDDHDHGAKRARQ.

Lysine 63 serves as the catalytic N6-GMP-lysine intermediate. Positions 363 to 391 are disordered; sequence KERNRRPRDEDRKRVGGDDHDHGAKRARQ.

Belongs to the eukaryotic GTase family. As to quaternary structure, heterodimer. The mRNA-capping enzyme is composed of two separate chains alpha and beta, respectively a mRNA guanylyltransferase and an mRNA 5'-triphosphate monophosphatase.

It localises to the nucleus. It catalyses the reaction a 5'-end diphospho-ribonucleoside in mRNA + GTP + H(+) = a 5'-end (5'-triphosphoguanosine)-ribonucleoside in mRNA + diphosphate. Its function is as follows. Second step of mRNA capping. Transfer of the GMP moiety of GTP to the 5'-end of RNA via an enzyme-GMP covalent reaction intermediate. The polypeptide is mRNA-capping enzyme subunit alpha (CEG1) (Yarrowia lipolytica (strain CLIB 122 / E 150) (Yeast)).